A 199-amino-acid chain; its full sequence is uncharacterized protein (199 aa).

Helical transmembrane passes span 27-47 (LIKI…PILA), 55-75 (LLTL…VAAL), and 172-192 (LLLL…VLLL).

The protein resides in the cell membrane. This is an uncharacterized protein from Synechocystis sp. (strain ATCC 27184 / PCC 6803 / Kazusa).